The sequence spans 140 residues: Small ribosomal subunit protein eS17y (140 aa).

This sequence belongs to the eukaryotic ribosomal protein eS17 family.

The protein is Small ribosomal subunit protein eS17y (RPS17B) of Arabidopsis thaliana (Mouse-ear cress).